Here is a 488-residue protein sequence, read N- to C-terminus: NADH-ubiquinone oxidoreductase chain 2 (488 aa).

14 consecutive transmembrane segments (helical) span residues M11–I31, M38–I58, E74–F94, I106–E126, N129–L149, L162–I182, I211–L231, G239–I259, I271–V291, V299–V319, I331–V351, I376–F396, I412–K434, and I460–I480.

The protein belongs to the complex I subunit 2 family.

The protein resides in the mitochondrion inner membrane. The enzyme catalyses a ubiquinone + NADH + 5 H(+)(in) = a ubiquinol + NAD(+) + 4 H(+)(out). Core subunit of the mitochondrial membrane respiratory chain NADH dehydrogenase (Complex I) that is believed to belong to the minimal assembly required for catalysis. Complex I functions in the transfer of electrons from NADH to the respiratory chain. The immediate electron acceptor for the enzyme is believed to be ubiquinone. This Dictyostelium discoideum (Social amoeba) protein is NADH-ubiquinone oxidoreductase chain 2 (nad2).